A 262-amino-acid polypeptide reads, in one-letter code: Hydroxyethylthiazole kinase (262 aa).

Met43 is a substrate binding site. Residues Arg118 and Thr164 each contribute to the ATP site. Ala191 lines the substrate pocket.

It belongs to the Thz kinase family. The cofactor is Mg(2+).

The enzyme catalyses 5-(2-hydroxyethyl)-4-methylthiazole + ATP = 4-methyl-5-(2-phosphooxyethyl)-thiazole + ADP + H(+). It participates in cofactor biosynthesis; thiamine diphosphate biosynthesis; 4-methyl-5-(2-phosphoethyl)-thiazole from 5-(2-hydroxyethyl)-4-methylthiazole: step 1/1. Catalyzes the phosphorylation of the hydroxyl group of 4-methyl-5-beta-hydroxyethylthiazole (THZ). This Cereibacter sphaeroides (strain ATCC 17025 / ATH 2.4.3) (Rhodobacter sphaeroides) protein is Hydroxyethylthiazole kinase.